The sequence spans 251 residues: Acidic leucine-rich nuclear phosphoprotein 32 family member B (251 aa).

LRR repeat units follow at residues 16-40 (PAAV…LTAE), 43-64 (NLEF…PKLP), and 65-84 (KLKK…DMLA). Position 86 is an N6-acetyllysine (K86). The stretch at 89-110 (NLTHLNLSGNKLKDISTLEPLK) is one LRR 4 repeat. Residues 123-161 (CEVTNLNDYRESVFKLLPQLTYLDGYDREDQEAPDSDAE) form the LRRCT domain. Residues 149–233 (DREDQEAPDS…DEDEDEEEEE (85 aa)) are compositionally biased toward acidic residues. A disordered region spans residues 149–251 (DREDQEAPDS…RETDDEGEDD (103 aa)). A Phosphoserine modification is found at S158. Over residues 234–244 (GGKGEKRKRET) the composition is skewed to basic and acidic residues. Residues 239–242 (KRKR) carry the Nuclear localization signal motif. T244 bears the Phosphothreonine mark.

Belongs to the ANP32 family. In terms of assembly, interacts with histones H3 and H4. Interacts with KLF5; this interaction induces promoter region-specific histone incorporation and inhibition of histone acetylation by ANP32B. As to quaternary structure, (Microbial infection) Interacts with Sendai virus protein M. (Microbial infection) Interacts with Measles virus protein M. In terms of assembly, (Microbial infection) Interacts with Hendra virus protein M; this interaction promotes nuclear localization of M. As to quaternary structure, (Microbial infection) Interacts with influenza virus B protein PB2; this interaction strongly supports influenza B virus replication. Some glutamate residues are glycylated by TTLL8. This modification occurs exclusively on glutamate residues and results in a glycine chain on the gamma-carboxyl group. In terms of processing, directly cleaved by caspase-3/CASP3. Expressed in heart, lung, pancreas, prostate and in spleen, thymus and placenta.

It is found in the nucleus. The protein resides in the cytoplasm. Multifunctional protein that is involved in the regulation of many processes including cell proliferation, apoptosis, cell cycle progression or transcription. Regulates the proliferation of neuronal stem cells, differentiation of leukemic cells and progression from G1 to S phase of the cell cycle. As negative regulator of caspase-3-dependent apoptosis, may act as an antagonist of ANP32A in regulating tissue homeostasis. Exhibits histone chaperone properties, able to recruit histones to certain promoters, thus regulating the transcription of specific genes. Also plays an essential role in the nucleocytoplasmic transport of specific mRNAs via the uncommon nuclear mRNA export receptor XPO1/CRM1. Participates in the regulation of adequate adaptive immune responses by acting on mRNA expression and cell proliferation. Its function is as follows. (Microbial infection) Plays an essential role in influenza A and B viral genome replication. Also plays a role in foamy virus mRNA export from the nucleus to the cytoplasm. The protein is Acidic leucine-rich nuclear phosphoprotein 32 family member B (ANP32B) of Homo sapiens (Human).